We begin with the raw amino-acid sequence, 1345 residues long: MSTAVETGSSPAKSNSNNSSSGGNNNNGNGNLSPNAKGVQRRQLRERKQRKLYLEEWSLGDEDGEGTRGFSVAEKLESSKFAQAGMVREMRGCDLTVAFLQQHGFNIPLLFRDKAGLGLRMPDPQEFTVNDVRLCVGSRRLLDVMDVNTQKNLQMTMKEWQQYYDSPQKDRLLNVISLEFSHTRLDRFVQSPEIVRQIDWVDVVWPKQLKDAQREGTNLLGGMMYPKVQKYCLMSVKNCYTDFHIDFGGTSVWYHILRGSKVFWLIPPTDRNLQLYEKWVLSGKQADIFFGDTVEKCARVYLTAGNTFFIPTGWIHAVYTPTQSLVFGGNFLHSFGIVKQLKTASVEDSTKVPQKFRYPFFTEMLWYVLARYVHTLLGHSHLEGEASLSEDEMAARPHTHLTHHELFGLKEIVMYLYDLPPQKKNVPSLVLDPVALIKDVRSLVERHCKDQQDLAITGVSVLKSPPGSQPPFLLYDRTRVKQEIKQEIARKNAEVIREQQQLEAGRAREAESDTSQSTGVGSVIGMGAGVEYSNGVMKKEQLENGSGVTVGGHGSQPEATFALPTDTLKYRPPKKMHLATALVAAAASSSSGGGGPVAGVGGSAVVGSSHSPTGGGVGPVTGAGGAISVIATSSSYIEGGQVGGILNMDNCHSPEGGGAKLSPNLTGTGQPRRRRTRCKNCAACQRSDCGTCPFCMDMVKFGGPGRAKQTCMMRQCLSPMLPVTAQCVYCHLDGWRQTPVSPQTKQLASADGPSALMECSVCYEIAHPDCALSQLDGTEDAADAKGIVNEDLPNSWECPSCCRSGKNYDYKPRHFRARQKSSEVRRVSVSHGQGGAEGHADGNTLLPPPVGQYNDFVFTSESEMESGTVSGHMTHWKHGMKRHHQLEVKTERNNSCDTPSPGISPNAIGGDSKVGKRRKSDDGTSVSSSMHESNDAPCGSSAEGAGGAGNANVSTNQWSGSGGGGGSRKKNSIRSQLAQQMLNSSTRVLKKPQYVVRPASGTGSSSSSGNGGSASATNGISNGSNQSGANSCGAGNGERGTNNGGLSGSNGLGNQHYSSSQNLALDPTVLKIIFRYLPQDTLVTCCSVCKVWSNAAVDPDLWKKMNCSEHKMSASLLTAIVRRQPEHLILDWTQIAKRQLAWLVARLPALKNLSLQNCPIQAVLALHTCLCPPLQTLDLSFVRGLNDAAIRDILSPPKDSRPGLSDSKTRLRDLKVMKLAGTDISDVAVRYITQSLPYLRHLDLSSCQRITDAGVAQIGTSTTATARLTELNLSACRLVSENALEHLAKCEGLIWLDLRHVPQVSTQSVIRFASNSKHDLCVRDIKLVERRRRNSTTANRSWHHD.

Residues 1–44 are disordered; the sequence is MSTAVETGSSPAKSNSNNSSSGGNNNNGNGNLSPNAKGVQRRQL. Residues 8-37 show a composition bias toward low complexity; sequence GSSPAKSNSNNSSSGGNNNNGNGNLSPNAK. Residue Tyr53 is modified to Phosphotyrosine. A phosphoserine mark is found at Ser58 and Ser79. The region spanning 180-348 is the JmjC domain; sequence FSHTRLDRFV…KQLKTASVED (169 aa). Thr241 is a binding site for substrate. Fe cation contacts are provided by His244 and Asp246. Lys261 is a binding site for substrate. Position 316 (His316) interacts with Fe cation. Residues 503–522 form a disordered region; the sequence is EAGRAREAESDTSQSTGVGS. The CXXC-type zinc finger occupies 671–717; that stretch reads PRRRRTRCKNCAACQRSDCGTCPFCMDMVKFGGPGRAKQTCMMRQCL. Zn(2+) contacts are provided by Cys678, Cys681, Cys684, Cys689, Cys692, Cys695, Cys711, and Cys716. Disordered regions lie at residues 816 to 848 and 876 to 1053; these read RARQ…LLPP and WKHG…NGLG. The span at 885–894 shows a compositional bias: basic and acidic residues; it reads QLEVKTERNN. Residues 973 to 987 are compositionally biased toward polar residues; sequence IRSQLAQQMLNSSTR. The segment covering 999–1025 has biased composition (low complexity); that stretch reads ASGTGSSSSSGNGGSASATNGISNGSN. A compositionally biased stretch (gly residues) spans 1034-1051; that stretch reads AGNGERGTNNGGLSGSNG. The F-box domain occupies 1059–1105; that stretch reads SSQNLALDPTVLKIIFRYLPQDTLVTCCSVCKVWSNAAVDPDLWKKM.

The protein belongs to the JHDM1 histone demethylase family. Requires Fe(2+) as cofactor.

Its subcellular location is the nucleus. The catalysed reaction is N(6),N(6)-dimethyl-L-lysyl(36)-[histone H3] + 2 2-oxoglutarate + 2 O2 = L-lysyl(36)-[histone H3] + 2 formaldehyde + 2 succinate + 2 CO2. Functionally, histone demethylase that specifically demethylates 'Lys-36' of histone H3, thereby playing a central role in histone code. The chain is JmjC domain-containing histone demethylation protein 1 (Kdm2) from Drosophila melanogaster (Fruit fly).